The primary structure comprises 222 residues: UPF0758 protein HSM_0009 (222 aa).

The region spanning 99–222 (QEFTSPDTVR…YFSFAEQGWI (124 aa)) is the MPN domain. Residues histidine 171, histidine 173, and aspartate 184 each coordinate Zn(2+). The JAMM motif signature appears at 171-184 (HNHPSGVSTPSMAD).

Belongs to the UPF0758 family.

This chain is UPF0758 protein HSM_0009, found in Histophilus somni (strain 2336) (Haemophilus somnus).